The primary structure comprises 309 residues: Homoserine kinase (309 aa).

An ATP-binding site is contributed by 91 to 101 (PIGSGLGSSAC).

The protein belongs to the GHMP kinase family. Homoserine kinase subfamily.

It localises to the cytoplasm. The enzyme catalyses L-homoserine + ATP = O-phospho-L-homoserine + ADP + H(+). The protein operates within amino-acid biosynthesis; L-threonine biosynthesis; L-threonine from L-aspartate: step 4/5. In terms of biological role, catalyzes the ATP-dependent phosphorylation of L-homoserine to L-homoserine phosphate. This is Homoserine kinase from Salmonella agona (strain SL483).